Here is a 1262-residue protein sequence, read N- to C-terminus: Clustered mitochondria protein homolog (1262 aa).

The tract at residues M1–T47 is disordered. Over residues S31–D40 the composition is skewed to polar residues. One can recognise a Clu domain in the interval A335–L580.

This sequence belongs to the CLU family.

The protein localises to the cytoplasm. Functionally, mRNA-binding protein involved in proper cytoplasmic distribution of mitochondria. This is Clustered mitochondria protein homolog from Caenorhabditis briggsae.